The sequence spans 245 residues: MTRSKFTSQGIKSKHAKKLKKQDYTVFSQKLGYTFKQPDLLQEALTHRSLGFPNNERLEFLGDSVLNCAVSTLLFKRFLLLPEGDLTRLRANFVNQDALHQLASALGIGELILLGDGERKSGGHQRPSILANAMEAIIGAIYLESGFEKVDQVIVALYDPLLNQLDPDLFGKDPKTLLQEYLQSRKVDLPEYSTLLTRGDAHAQVFHVECVIPEFAIRTSGEGTSRRRAEQEAARRAYKLAVVRH.

The 123-residue stretch at 24-146 (YTVFSQKLGY…IIGAIYLESG (123 aa)) folds into the RNase III domain. Glu-59 provides a ligand contact to Mg(2+). Residue Asp-63 is part of the active site. Residues Asn-132 and Glu-135 each contribute to the Mg(2+) site. Residue Glu-135 is part of the active site. In terms of domain architecture, DRBM spans 173-243 (DPKTLLQEYL…ARRAYKLAVV (71 aa)).

The protein belongs to the ribonuclease III family. Homodimer. It depends on Mg(2+) as a cofactor.

It is found in the cytoplasm. It carries out the reaction Endonucleolytic cleavage to 5'-phosphomonoester.. Its function is as follows. Digests double-stranded RNA. Involved in the processing of primary rRNA transcript to yield the immediate precursors to the large and small rRNAs (23S and 16S). Processes some mRNAs, and tRNAs when they are encoded in the rRNA operon. Processes pre-crRNA and tracrRNA of type II CRISPR loci if present in the organism. The protein is Ribonuclease 3 of Nitrosomonas eutropha (strain DSM 101675 / C91 / Nm57).